Here is a 132-residue protein sequence, read N- to C-terminus: Small ribosomal subunit protein uS8 (132 aa).

It belongs to the universal ribosomal protein uS8 family. In terms of assembly, part of the 30S ribosomal subunit. Contacts proteins S5 and S12.

In terms of biological role, one of the primary rRNA binding proteins, it binds directly to 16S rRNA central domain where it helps coordinate assembly of the platform of the 30S subunit. In Geotalea uraniireducens (strain Rf4) (Geobacter uraniireducens), this protein is Small ribosomal subunit protein uS8.